We begin with the raw amino-acid sequence, 138 residues long: Envelope glycoprotein N (138 aa).

The signal sequence occupies residues 1 to 21 (MEWNTLVLGLLVLSVVAESSG). Residues 22-101 (NNSSTSTSAT…SHMYELSLSS (80 aa)) are Virion surface-facing. Residues 102–122 (FAAWWTMLNALILMGAFCIVL) traverse the membrane as a helical segment. The Intravirion segment spans residues 123 to 138 (RHCCFQNFTATTTKGY).

The protein belongs to the herpesviridae glycoprotein N family. As to quaternary structure, interacts (via N-terminus) with gM (via N-terminus). The gM-gN heterodimer forms the gCII complex. Post-translationally, O-glycosylated.

The protein resides in the virion membrane. The protein localises to the host membrane. Its subcellular location is the host Golgi apparatus. It is found in the host trans-Golgi network. Functionally, envelope glycoprotein necessary for proper maturation of gM and modulation of its membrane fusion activity. Also plays a critical role in virion morphogenesis. This Human cytomegalovirus (strain AD169) (HHV-5) protein is Envelope glycoprotein N.